The primary structure comprises 78 residues: U7-lycotoxin-Ls1e (78 aa).

Residues 1–22 (MKLIIFTGLALLLIVSLIDVEA) form the signal peptide. Positions 23–26 (QNEG) are excised as a propeptide.

It belongs to the neurotoxin 19 (CSTX) family. 07 (U7-Lctx) subfamily. In terms of processing, contains 4 disulfide bonds. As to expression, expressed by the venom gland.

The protein localises to the secreted. This Lycosa singoriensis (Wolf spider) protein is U7-lycotoxin-Ls1e.